The chain runs to 298 residues: Syntenin-1 (298 aa).

N-acetylserine is present on Ser-2. The interaction with PDCD6IP stretch occupies residues 2 to 60 (SLYPSLEDLKVDKVIQAQTAFSANPANPAILSEASAPIPHDGNLYPRLYPELSQYMGLS). Short sequence motifs (LYPX(n)L motif) lie at residues 3–7 (LYPSL), 45–49 (LYPRL), and 49–53 (LYPEL). A Phosphoserine modification is found at Ser-6. Residue Tyr-46 is modified to Phosphotyrosine. PDZ domains are found at residues 114–193 (EVIL…IRDR) and 198–273 (TITM…MPAF). A 1,2-diacyl-sn-glycero-3-phospho-(1D-myo-inositol-4,5-bisphosphate)-binding positions include Asn-215 and 250 to 251 (KD).

Monomer and homodimer. Interacts with SDC1, SDC2, SDC3, SDC4, NRXN2, EPHA7, EPHB1, NF2 isoform 1, TGFA and IL5RA. Interacts with NFASC and PTPRJ. Interacts with SDCBP2. Interacts with PDCD6IP. Forms a complex with PDCD6IP and SDC2. Interacts (via C-terminus) with TGFBR1. Binds to FZD7; this interaction is increased by inositol trisphosphate (IP3). Interacts with SMO. Phosphorylated on tyrosine residues. In terms of tissue distribution, expressed in lung cancers, including adenocarcinoma, squamous cell carcinoma and small-cell carcinoma (at protein level). Widely expressed. Expressed in fetal kidney, liver, lung and brain. In adult highest expression in heart and placenta.

It localises to the cell junction. Its subcellular location is the focal adhesion. The protein localises to the adherens junction. It is found in the cell membrane. The protein resides in the endoplasmic reticulum membrane. It localises to the nucleus. Its subcellular location is the melanosome. The protein localises to the cytoplasm. It is found in the cytosol. The protein resides in the cytoskeleton. It localises to the secreted. Its subcellular location is the extracellular exosome. The protein localises to the membrane raft. Its function is as follows. Multifunctional adapter protein involved in diverse array of functions including trafficking of transmembrane proteins, neuro and immunomodulation, exosome biogenesis, and tumorigenesis. Positively regulates TGFB1-mediated SMAD2/3 activation and TGFB1-induced epithelial-to-mesenchymal transition (EMT) and cell migration in various cell types. May increase TGFB1 signaling by enhancing cell-surface expression of TGFR1 by preventing the interaction between TGFR1 and CAV1 and subsequent CAV1-dependent internalization and degradation of TGFR1. In concert with SDC1/4 and PDCD6IP, regulates exosome biogenesis. Regulates migration, growth, proliferation, and cell cycle progression in a variety of cancer types. In adherens junctions may function to couple syndecans to cytoskeletal proteins or signaling components. Seems to couple transcription factor SOX4 to the IL-5 receptor (IL5RA). May also play a role in vesicular trafficking. Seems to be required for the targeting of TGFA to the cell surface in the early secretory pathway. The polypeptide is Syntenin-1 (SDCBP) (Homo sapiens (Human)).